Here is a 120-residue protein sequence, read N- to C-terminus: MTNEEMISAIKEMSVLELNDLVKAIEEEFGVTAAAPVAAAGAAGGAVEEEKTEFDVVLTSAGASKIKVVKAVREITGLGLKDAKDLVDNAPKPIKEGVSKEEAEEVQGKLEEAGASVEVK.

Positions 95–112 are enriched in basic and acidic residues; the sequence is KEGVSKEEAEEVQGKLEE. A disordered region spans residues 95–120; sequence KEGVSKEEAEEVQGKLEEAGASVEVK.

This sequence belongs to the bacterial ribosomal protein bL12 family. As to quaternary structure, homodimer. Part of the ribosomal stalk of the 50S ribosomal subunit. Forms a multimeric L10(L12)X complex, where L10 forms an elongated spine to which 2 to 4 L12 dimers bind in a sequential fashion. Binds GTP-bound translation factors.

Functionally, forms part of the ribosomal stalk which helps the ribosome interact with GTP-bound translation factors. Is thus essential for accurate translation. This Oceanobacillus iheyensis (strain DSM 14371 / CIP 107618 / JCM 11309 / KCTC 3954 / HTE831) protein is Large ribosomal subunit protein bL12.